The primary structure comprises 189 residues: MYKEPLGVKVDFNTGVIPGAKKIVRRLSDMKGYFLDEKSWEELVKKEDPIVYEVYAIEQEEKEGDLNFATTILYPGKVGKEFFFTKGHYHSKKDRAEVYVALKGKGGMLLQTPEGEARWIPMEPGTVVYVPPYWAHRTVNTGDEPFIFLAIYPADAGHDYGTIAERGFSKIVIEENGEVKVVDNPRWKS.

Positions 88, 90, 97, and 136 each coordinate Fe cation.

Belongs to the archaeal-type GPI family. As to quaternary structure, homodimer. The cofactor is Fe cation.

The protein localises to the cytoplasm. It carries out the reaction alpha-D-glucose 6-phosphate = beta-D-fructose 6-phosphate. It functions in the pathway carbohydrate degradation; glycolysis; D-glyceraldehyde 3-phosphate and glycerone phosphate from D-glucose: step 2/4. In Pyrococcus abyssi (strain GE5 / Orsay), this protein is Glucose-6-phosphate isomerase (pgiA).